A 30-amino-acid polypeptide reads, in one-letter code: NADH-ubiquinone oxidoreductase 18 kDa subunit (30 aa).

Complex I is composed of about 45 different subunits.

It localises to the mitochondrion inner membrane. The catalysed reaction is a ubiquinone + NADH + 5 H(+)(in) = a ubiquinol + NAD(+) + 4 H(+)(out). Transfer of electrons from NADH to the respiratory chain. The immediate electron acceptor for the enzyme is believed to be ubiquinone. In Solanum tuberosum (Potato), this protein is NADH-ubiquinone oxidoreductase 18 kDa subunit.